The primary structure comprises 383 residues: MKKEIVGMLLAGGEGKRLGQLTRKLAKPAVYFGGKYRIIDFPLSNCTNSGIDTVGVLTQYEPLALNGHIGIGSPWDLDRRHGGVTVLPPYIEKQGGSWYKGTADAIYQNRYYIEQYDPEYVLILSGDHIYKMDYDRMISHHKKLGADATISVIEVPWEEASRFGIMNTNEEMTITQFEEKPTTPISNLASMGIYIFNWSVLKSYLIQDAKQANSSHDFGKDIIPKMLAKDLKLVAYPFEGYWKDVGTIKSYWEANMDLLDEHSSLMLNDPSWRIYSVNRNQPPQYISTRAYVRCSLVNEGCVVHGNVEQSILFPGVHIGANSSVFESVLMPNVKVGENVVLRRTIIMEGACIPSGTHLAPSDPDDILVIDKDTEFSPSIAANQ.

Residues Tyr99, Gly164, Glu179 to Lys180, and Ser190 contribute to the alpha-D-glucose 1-phosphate site.

It belongs to the bacterial/plant glucose-1-phosphate adenylyltransferase family. Homotetramer.

It carries out the reaction alpha-D-glucose 1-phosphate + ATP + H(+) = ADP-alpha-D-glucose + diphosphate. It functions in the pathway glycan biosynthesis; glycogen biosynthesis. Its function is as follows. Involved in the biosynthesis of ADP-glucose, a building block required for the elongation reactions to produce glycogen. Catalyzes the reaction between ATP and alpha-D-glucose 1-phosphate (G1P) to produce pyrophosphate and ADP-Glc. The protein is Glucose-1-phosphate adenylyltransferase of Halalkalibacterium halodurans (strain ATCC BAA-125 / DSM 18197 / FERM 7344 / JCM 9153 / C-125) (Bacillus halodurans).